A 312-amino-acid polypeptide reads, in one-letter code: Homoserine O-succinyltransferase (312 aa).

Cys142 serves as the catalytic Acyl-thioester intermediate. Substrate is bound by residues Lys163 and Ser192. The active-site Proton acceptor is His235. Glu237 is a catalytic residue. Arg249 contacts substrate.

This sequence belongs to the MetA family.

The protein localises to the cytoplasm. The catalysed reaction is L-homoserine + succinyl-CoA = O-succinyl-L-homoserine + CoA. It participates in amino-acid biosynthesis; L-methionine biosynthesis via de novo pathway; O-succinyl-L-homoserine from L-homoserine: step 1/1. Its function is as follows. Transfers a succinyl group from succinyl-CoA to L-homoserine, forming succinyl-L-homoserine. In Aliivibrio salmonicida (strain LFI1238) (Vibrio salmonicida (strain LFI1238)), this protein is Homoserine O-succinyltransferase.